We begin with the raw amino-acid sequence, 426 residues long: Glutamate-1-semialdehyde 2,1-aminomutase (426 aa).

N6-(pyridoxal phosphate)lysine is present on Lys265.

Belongs to the class-III pyridoxal-phosphate-dependent aminotransferase family. HemL subfamily. As to quaternary structure, homodimer. Pyridoxal 5'-phosphate is required as a cofactor.

The protein resides in the cytoplasm. The enzyme catalyses (S)-4-amino-5-oxopentanoate = 5-aminolevulinate. It functions in the pathway porphyrin-containing compound metabolism; protoporphyrin-IX biosynthesis; 5-aminolevulinate from L-glutamyl-tRNA(Glu): step 2/2. The protein is Glutamate-1-semialdehyde 2,1-aminomutase of Halorhodospira halophila (strain DSM 244 / SL1) (Ectothiorhodospira halophila (strain DSM 244 / SL1)).